A 269-amino-acid polypeptide reads, in one-letter code: Putative ankyrin repeat protein L23 (269 aa).

ANK repeat units follow at residues E118–S147, D148–A177, N179–E207, Q208–A237, and D238–A267.

The sequence is that of Putative ankyrin repeat protein L23 from Acanthamoeba polyphaga (Amoeba).